Consider the following 327-residue polypeptide: Phenylalanine--tRNA ligase alpha subunit (327 aa).

Position 252 (Glu252) interacts with Mg(2+).

This sequence belongs to the class-II aminoacyl-tRNA synthetase family. Phe-tRNA synthetase alpha subunit type 1 subfamily. As to quaternary structure, tetramer of two alpha and two beta subunits. The cofactor is Mg(2+).

Its subcellular location is the cytoplasm. The catalysed reaction is tRNA(Phe) + L-phenylalanine + ATP = L-phenylalanyl-tRNA(Phe) + AMP + diphosphate + H(+). This is Phenylalanine--tRNA ligase alpha subunit from Cronobacter sakazakii (strain ATCC BAA-894) (Enterobacter sakazakii).